A 338-amino-acid polypeptide reads, in one-letter code: UPF0324 membrane protein TauZ (338 aa).

The next 9 membrane-spanning stretches (helical) occupy residues 36–55 (YGAP…NFLA), 75–92 (LGVA…LAAL), 96–118 (AIAL…SRLV), 125–147 (ALLT…AAVL), 162–184 (LSVT…LFGF), 223–245 (LIRV…ARGL), 255–277 (PLLP…GLIP), 290–309 (WALL…GKML), and 314–336 (GAIA…GLHL).

Belongs to the UPF0324 family.

The protein localises to the cell membrane. In Paracoccus pantotrophus (Thiosphaera pantotropha), this protein is UPF0324 membrane protein TauZ (tauZ).